We begin with the raw amino-acid sequence, 193 residues long: Ion-translocating oxidoreductase complex subunit A (193 aa).

The next 6 membrane-spanning stretches (helical) occupy residues 4-24 (FFFI…KFLG), 39-59 (IGMG…SWMV), 71-91 (FLRI…IEVV), 102-122 (ALGI…VALL), 134-154 (LLYG…FAGM), and 167-187 (FAGA…FMGF).

The protein belongs to the NqrDE/RnfAE family. The complex is composed of six subunits: RnfA, RnfB, RnfC, RnfD, RnfE and RnfG.

Its subcellular location is the cellular chromatophore membrane. In terms of biological role, part of a membrane-bound complex that couples electron transfer with translocation of ions across the membrane. This chain is Ion-translocating oxidoreductase complex subunit A, found in Cereibacter sphaeroides (strain ATCC 17029 / ATH 2.4.9) (Rhodobacter sphaeroides).